The chain runs to 474 residues: Glutamate--tRNA ligase (474 aa).

A 'HIGH' region motif is present at residues P9–G19. Positions K240–R244 match the 'KMSKS' region motif. Residue K243 participates in ATP binding.

This sequence belongs to the class-I aminoacyl-tRNA synthetase family. Glutamate--tRNA ligase type 1 subfamily. In terms of assembly, monomer.

The protein resides in the cytoplasm. It catalyses the reaction tRNA(Glu) + L-glutamate + ATP = L-glutamyl-tRNA(Glu) + AMP + diphosphate. Functionally, catalyzes the attachment of glutamate to tRNA(Glu) in a two-step reaction: glutamate is first activated by ATP to form Glu-AMP and then transferred to the acceptor end of tRNA(Glu). The protein is Glutamate--tRNA ligase of Vibrio vulnificus (strain YJ016).